We begin with the raw amino-acid sequence, 204 residues long: Ribosomal RNA small subunit methyltransferase G (204 aa).

Residues Gly74, Leu79, 125–126 (AY), and Arg138 each bind S-adenosyl-L-methionine.

Belongs to the methyltransferase superfamily. RNA methyltransferase RsmG family.

It is found in the cytoplasm. Functionally, specifically methylates the N7 position of a guanine in 16S rRNA. The sequence is that of Ribosomal RNA small subunit methyltransferase G from Brachyspira hyodysenteriae (strain ATCC 49526 / WA1).